The primary structure comprises 627 residues: Protein fem-1 homolog B (627 aa).

ANK repeat units lie at residues 45–74 (QRST…VQTQ), 87–116 (DGAT…NVNH), 120–149 (TNST…NISI), and 153–182 (YDNT…DPNA). Residues H185, C186, and H218 each contribute to the Zn(2+) site. ANK repeat units follow at residues 186–215 (CGAT…AIVV) and 218–248 (HGMT…DRRS). A TPR repeat occupies 344-377 (SHPIIYRGAVYADNMEFEQCIKLWLHALHLRQKG). 2 ANK repeats span residues 483-527 (EGFS…EVNA) and 531-568 (EGNS…HTDM).

This sequence belongs to the fem-1 family. As to quaternary structure, component of a CRL2 E3 ubiquitin-protein ligase complex, also named ECS (Elongin BC-CUL2/5-SOCS-box protein) complex, composed of CUL2, Elongin BC (ELOB and ELOC), RBX1 and substrate-specific adapter FEM1B. Homooligomer. Interacts with PPM1F and PHTF1. Interacts with the death domain of FAS/TNFRSF6 and TNFRSF1A. Interacts with CHEK1. Interacts with NKX3-1. In terms of tissue distribution, expressed in pancreatic islets, within both beta cells and non-beta cells (at protein level). Highly expressed in adult testis; expressed in all types of spermatogonia. Also expressed in the prostate of neonatal mice.

It localises to the cytoplasm. Its subcellular location is the nucleus. The protein operates within protein modification; protein ubiquitination. Activity of the CRL2(FEM1B) complex toward FNIP1 is inhibited by BEX family proteins (BEX1, BEX2, BEX3 and/or BEX4) in absence of reductive stress. Mechanistically, BEX proteins act as pseudosubstrate inhibitors that associate with FEM1B via zinc in absence of reductive stress, thereby preventing association between FEM1B and FNIP1. Functionally, substrate-recognition component of a Cul2-RING (CRL2) E3 ubiquitin-protein ligase complex of the DesCEND (destruction via C-end degrons) pathway, which recognizes a C-degron located at the extreme C terminus of target proteins, leading to their ubiquitination and degradation. The C-degron recognized by the DesCEND pathway is usually a motif of less than ten residues and can be present in full-length proteins, truncated proteins or proteolytically cleaved forms. The CRL2(FEM1B) complex specifically recognizes proteins ending with -Gly-Leu-Asp-Arg, such as CDK5R1, leading to their ubiquitination and degradation. Also acts as a regulator of the reductive stress response by mediating ubiquitination of reduced FNIP1: in response to reductive stress, the CRL2(FEM1B) complex specifically recognizes a conserved Cys degron in FNIP1 when this degron is reduced, leading to FNIP1 degradation and subsequent activation of mitochondria to recalibrate reactive oxygen species (ROS). Mechanistically, recognizes and binds reduced FNIP1 through two interface zinc ions, which act as a molecular glue that recruit reduced FNIP1 to FEM1B. Promotes ubiquitination of GLI1, suppressing GLI1 transcriptional activator activity. Promotes ubiquitination and degradation of ANKRD37. Promotes ubiquitination and degradation of SLBP. Involved in apoptosis by acting as a death receptor-associated protein that mediates apoptosis. Also involved in glucose homeostasis in pancreatic islet. May also act as an adapter/mediator in replication stress-induced signaling that leads to the activation of CHEK1. This chain is Protein fem-1 homolog B, found in Mus musculus (Mouse).